Consider the following 285-residue polypeptide: Pantothenate synthetase (285 aa).

32–39 (MGALHDGH) contributes to the ATP binding site. Histidine 39 serves as the catalytic Proton donor. Glutamine 63 contacts (R)-pantoate. Glutamine 63 is a beta-alanine binding site. An ATP-binding site is contributed by 149–152 (GEKD). Glutamine 155 serves as a coordination point for (R)-pantoate. Residues valine 178 and 186-189 (MSSR) each bind ATP.

The protein belongs to the pantothenate synthetase family. In terms of assembly, homodimer.

Its subcellular location is the cytoplasm. It catalyses the reaction (R)-pantoate + beta-alanine + ATP = (R)-pantothenate + AMP + diphosphate + H(+). It functions in the pathway cofactor biosynthesis; (R)-pantothenate biosynthesis; (R)-pantothenate from (R)-pantoate and beta-alanine: step 1/1. In terms of biological role, catalyzes the condensation of pantoate with beta-alanine in an ATP-dependent reaction via a pantoyl-adenylate intermediate. The sequence is that of Pantothenate synthetase from Ruegeria pomeroyi (strain ATCC 700808 / DSM 15171 / DSS-3) (Silicibacter pomeroyi).